The primary structure comprises 558 residues: Oxygen-dependent choline dehydrogenase (558 aa).

Position 8-37 (8-37) interacts with FAD; that stretch reads DYIIIGAGSAGNVLATRLTEDSDVSVLLLE. The active-site Proton acceptor is the H475.

The protein belongs to the GMC oxidoreductase family. It depends on FAD as a cofactor.

It carries out the reaction choline + A = betaine aldehyde + AH2. The enzyme catalyses betaine aldehyde + NAD(+) + H2O = glycine betaine + NADH + 2 H(+). The protein operates within amine and polyamine biosynthesis; betaine biosynthesis via choline pathway; betaine aldehyde from choline (cytochrome c reductase route): step 1/1. Involved in the biosynthesis of the osmoprotectant glycine betaine. Catalyzes the oxidation of choline to betaine aldehyde and betaine aldehyde to glycine betaine at the same rate. This chain is Oxygen-dependent choline dehydrogenase, found in Chromohalobacter salexigens (strain ATCC BAA-138 / DSM 3043 / CIP 106854 / NCIMB 13768 / 1H11).